Consider the following 213-residue polypeptide: Probable nicotinate-nucleotide adenylyltransferase (213 aa).

Belongs to the NadD family.

The enzyme catalyses nicotinate beta-D-ribonucleotide + ATP + H(+) = deamido-NAD(+) + diphosphate. Its pathway is cofactor biosynthesis; NAD(+) biosynthesis; deamido-NAD(+) from nicotinate D-ribonucleotide: step 1/1. Its function is as follows. Catalyzes the reversible adenylation of nicotinate mononucleotide (NaMN) to nicotinic acid adenine dinucleotide (NaAD). The chain is Probable nicotinate-nucleotide adenylyltransferase from Escherichia coli O17:K52:H18 (strain UMN026 / ExPEC).